The primary structure comprises 438 residues: ATP synthase subunit alpha, chloroplastic (438 aa).

170–177 (GDRQTGKT) serves as a coordination point for ATP.

Belongs to the ATPase alpha/beta chains family. As to quaternary structure, F-type ATPases have 2 components, CF(1) - the catalytic core - and CF(0) - the membrane proton channel. CF(1) has five subunits: alpha(3), beta(3), gamma(1), delta(1), epsilon(1). CF(0) has four main subunits: a, b, b' and c.

Its subcellular location is the plastid. The protein localises to the chloroplast thylakoid membrane. It carries out the reaction ATP + H2O + 4 H(+)(in) = ADP + phosphate + 5 H(+)(out). Its function is as follows. Produces ATP from ADP in the presence of a proton gradient across the membrane. The alpha chain is a regulatory subunit. This is ATP synthase subunit alpha, chloroplastic from Ochrosphaera neapolitana.